The following is a 464-amino-acid chain: Trehalose-6-phosphate synthase (464 aa).

Arginine 10 lines the D-glucose 6-phosphate pocket. Position 23–24 (23–24 (GG)) interacts with UDP-alpha-D-glucose. 2 residues coordinate D-glucose 6-phosphate: tyrosine 81 and aspartate 135. Arginine 268 and lysine 273 together coordinate UDP-alpha-D-glucose. Arginine 306 is a D-glucose 6-phosphate binding site. 371–375 (LVAKE) serves as a coordination point for UDP-alpha-D-glucose.

It belongs to the glycosyltransferase 20 family. Homotetramer.

It carries out the reaction D-glucose 6-phosphate + UDP-alpha-D-glucose = alpha,alpha-trehalose 6-phosphate + UDP + H(+). Its pathway is glycan biosynthesis; trehalose biosynthesis. In terms of biological role, probably involved in the osmoprotection via the biosynthesis of trehalose. Catalyzes the transfer of glucose from UDP-alpha-D-glucose (UDP-Glc) to D-glucose 6-phosphate (Glc-6-P) to form trehalose-6-phosphate. Acts with retention of the anomeric configuration of the UDP-sugar donor. This Sinorhizobium fredii (strain NBRC 101917 / NGR234) protein is Trehalose-6-phosphate synthase.